Reading from the N-terminus, the 493-residue chain is Cytochrome c-552 (493 aa).

An N-terminal signal peptide occupies residues 1–25 (MEKKLKSWQGWLLFCGAMAVVFVLG). H116 provides a ligand contact to heme c. Residues C144, C147, and K148 each coordinate heme. Positions 182, 185, 186, 224, 227, and 228 each coordinate heme c. E230, Y231, K276, and Q278 together coordinate Ca(2+). Y231 serves as a coordination point for substrate. H279 lines the substrate pocket. H290, C297, C300, H301, H315, C328, C331, H332, and H407 together coordinate heme c.

It belongs to the cytochrome c-552 family. The cofactor is Ca(2+). It depends on heme c as a cofactor.

Its subcellular location is the periplasm. It catalyses the reaction 6 Fe(III)-[cytochrome c] + NH4(+) + 2 H2O = 6 Fe(II)-[cytochrome c] + nitrite + 8 H(+). Its pathway is nitrogen metabolism; nitrate reduction (assimilation). In terms of biological role, catalyzes the reduction of nitrite to ammonia, consuming six electrons in the process. The chain is Cytochrome c-552 from Bacteroides fragilis (strain ATCC 25285 / DSM 2151 / CCUG 4856 / JCM 11019 / LMG 10263 / NCTC 9343 / Onslow / VPI 2553 / EN-2).